Consider the following 455-residue polypeptide: Phosphoglucosamine mutase (455 aa).

Ser104 acts as the Phosphoserine intermediate in catalysis. Mg(2+) contacts are provided by Ser104, Asp243, Asp245, and Asp247. At Ser104 the chain carries Phosphoserine.

Belongs to the phosphohexose mutase family. Requires Mg(2+) as cofactor. Post-translationally, activated by phosphorylation.

It catalyses the reaction alpha-D-glucosamine 1-phosphate = D-glucosamine 6-phosphate. In terms of biological role, catalyzes the conversion of glucosamine-6-phosphate to glucosamine-1-phosphate. The chain is Phosphoglucosamine mutase from Synechococcus sp. (strain CC9311).